The sequence spans 542 residues: MTFSEILDRVGSMGPFQFLHVALLGFPILGMANHNLLQIFTATTPSHHCRPPPNASAGPWVLPVNQNGQTERCLRFVHPPNASLPNDTQGATEPCLDGWVYNSTRDTIVTEWDLVCSSNKLKEMAQSIFMAGILIGGLVLGDLSDRFGRKPILTCCYLLLAASGSSTAFSPTLPIYMVFRFLCGFSISGISLSTVILNVEWVPTKMRAITSTAIGYCYTIGQFILPGLAYAIPQWRWLQLTVSVPYFIFSLLSWWIPESIRWLVLAGKSSKALKILRRVATFNGKKEEGEKLSLEELKLSLQKDISLAKAKYSTADLFRTPILRRVTLCLSLAWFATGFAYYSLAMGVEEFGVNIYILQIIFGGVDIPAKFITILSLSYLGRHITQGAALILAGAAILSLIFVPMDMSLLRTILAVFGKGCLSGSFSCLFLYTSELFPTVIRQTGMGISNVWARVGSMISPLVKITGEIQPFIPNIIYGTVALLGGSAALFLPETLNQPLPETLEDMENWFLQSKKLKQEPEAEKASQRIPLQPSGPGVDRS.

Residues 1 to 9 lie on the Cytoplasmic side of the membrane; it reads MTFSEILDR. Phosphoserine is present on serine 4. A helical transmembrane segment spans residues 10-30; that stretch reads VGSMGPFQFLHVALLGFPILG. Over 31-123 the chain is Extracellular; the sequence is MANHNLLQIF…LVCSSNKLKE (93 aa). Asparagine 86 carries an N-linked (GlcNAc...) asparagine glycan. Residues 124–144 form a helical membrane-spanning segment; that stretch reads MAQSIFMAGILIGGLVLGDLS. Residues 145-150 are Cytoplasmic-facing; it reads DRFGRK. The chain crosses the membrane as a helical span at residues 151-171; that stretch reads PILTCCYLLLAASGSSTAFSP. The Extracellular segment spans residues 172 to 176; it reads TLPIY. Residues 177-197 form a helical membrane-spanning segment; it reads MVFRFLCGFSISGISLSTVIL. The Cytoplasmic segment spans residues 198–212; it reads NVEWVPTKMRAITST. The helical transmembrane segment at 213–233 threads the bilayer; the sequence is AIGYCYTIGQFILPGLAYAIP. At 234-236 the chain is on the extracellular side; that stretch reads QWR. A helical transmembrane segment spans residues 237–257; the sequence is WLQLTVSVPYFIFSLLSWWIP. The Cytoplasmic portion of the chain corresponds to 258-327; sequence ESIRWLVLAG…FRTPILRRVT (70 aa). Residues 328 to 348 form a helical membrane-spanning segment; sequence LCLSLAWFATGFAYYSLAMGV. Residues 349-354 lie on the Extracellular side of the membrane; the sequence is EEFGVN. A helical transmembrane segment spans residues 355–375; it reads IYILQIIFGGVDIPAKFITIL. Topologically, residues 376–389 are cytoplasmic; it reads SLSYLGRHITQGAA. A helical transmembrane segment spans residues 390–410; the sequence is LILAGAAILSLIFVPMDMSLL. Arginine 411 is a topological domain (extracellular). Residues 412-432 form a helical membrane-spanning segment; it reads TILAVFGKGCLSGSFSCLFLY. At 433-471 the chain is on the cytoplasmic side; that stretch reads TSELFPTVIRQTGMGISNVWARVGSMISPLVKITGEIQP. The chain crosses the membrane as a helical span at residues 472-492; sequence FIPNIIYGTVALLGGSAALFL. Over 493 to 542 the chain is Extracellular; it reads PETLNQPLPETLEDMENWFLQSKKLKQEPEAEKASQRIPLQPSGPGVDRS. Basic and acidic residues predominate over residues 518-527; that stretch reads KQEPEAEKAS. The disordered stretch occupies residues 518-542; it reads KQEPEAEKASQRIPLQPSGPGVDRS.

This sequence belongs to the major facilitator (TC 2.A.1) superfamily. Organic cation transporter (TC 2.A.1.19) family.

The protein resides in the basolateral cell membrane. It catalyses the reaction estrone 3-sulfate(out) + glutarate(in) = estrone 3-sulfate(in) + glutarate(out). It carries out the reaction estrone 3-sulfate(in) + 2-oxoglutarate(out) = estrone 3-sulfate(out) + 2-oxoglutarate(in). The enzyme catalyses glutarate(in) + 2-oxoglutarate(out) = glutarate(out) + 2-oxoglutarate(in). The catalysed reaction is urate(in) + 2-oxoglutarate(out) = urate(out) + 2-oxoglutarate(in). It catalyses the reaction taurocholate(out) + glutarate(in) = taurocholate(in) + glutarate(out). It carries out the reaction dehydroepiandrosterone 3-sulfate(out) + glutarate(in) = dehydroepiandrosterone 3-sulfate(in) + glutarate(out). The enzyme catalyses prostaglandin F2alpha(out) + glutarate(in) = prostaglandin F2alpha(in) + glutarate(out). The catalysed reaction is prostaglandin F2alpha(out) + 2-oxoglutarate(in) = prostaglandin F2alpha(in) + 2-oxoglutarate(out). It catalyses the reaction (R)-carnitine(out) + 2-oxoglutarate(in) = (R)-carnitine(in) + 2-oxoglutarate(out). It carries out the reaction glutarate(in) + (R)-carnitine(out) = glutarate(out) + (R)-carnitine(in). The enzyme catalyses prostaglandin E2(out) + 2-oxoglutarate(in) = prostaglandin E2(in) + 2-oxoglutarate(out). The catalysed reaction is prostaglandin E2(out) + glutarate(in) = prostaglandin E2(in) + glutarate(out). It catalyses the reaction urate(in) + glutarate(out) = urate(out) + glutarate(in). It carries out the reaction taurocholate(out) + 2-oxoglutarate(in) = taurocholate(in) + 2-oxoglutarate(out). The enzyme catalyses dehydroepiandrosterone 3-sulfate(out) + 2-oxoglutarate(in) = dehydroepiandrosterone 3-sulfate(in) + 2-oxoglutarate(out). The catalysed reaction is kynurenate(out) + a dicarboxylate(in) = kynurenate(in) + a dicarboxylate(out). It catalyses the reaction (indol-3-yl)acetate(out) + a dicarboxylate(in) = (indol-3-yl)acetate(in) + a dicarboxylate(out). It carries out the reaction indoxyl sulfate(out) + a dicarboxylate(in) = indoxyl sulfate(in) + a dicarboxylate(out). The enzyme catalyses N-benzoylglycine(out) + a dicarboxylate(in) = N-benzoylglycine(in) + a dicarboxylate(out). The catalysed reaction is 3-carboxy-4-methyl-5-propyl-2-furanpropanoate(out) + a dicarboxylate(in) = 3-carboxy-4-methyl-5-propyl-2-furanpropanoate(in) + a dicarboxylate(out). It catalyses the reaction (6R)-L-erythro-5,6,7,8-tetrahydrobiopterin(out) + a dicarboxylate(in) = (6R)-L-erythro-5,6,7,8-tetrahydrobiopterin(in) + a dicarboxylate(out). It carries out the reaction L-erythro-7,8-dihydrobiopterin(out) + a dicarboxylate(in) = L-erythro-7,8-dihydrobiopterin(in) + a dicarboxylate(out). The enzyme catalyses L-sepiapterin(out) + a dicarboxylate(in) = L-sepiapterin(in) + a dicarboxylate(out). Functions as an organic anion/dicarboxylate exchanger that couples organic anion uptake indirectly to the sodium gradient. Transports organic anions such as estrone 3-sulfate (E1S) and urate in exchange for dicarboxylates such as glutarate or ketoglutarate (2-oxoglutarate). Plays an important role in the excretion of endogenous and exogenous organic anions, especially from the kidney and the brain. E1S transport is pH- and chloride-dependent and may also involve E1S/cGMP exchange. Responsible for the transport of prostaglandin E2 (PGE2) and prostaglandin F2(alpha) (PGF2(alpha)) in the basolateral side of the renal tubule. Involved in the transport of neuroactive tryptophan metabolites kynurenate and xanthurenate. Functions as a biopterin transporters involved in the uptake and the secretion of coenzymes tetrahydrobiopterin (BH4), dihydrobiopterin (BH2) and sepiapterin to urine, thereby determining baseline levels of blood biopterins. May be involved in the basolateral transport of steviol, a metabolite of the popular sugar substitute stevioside. May participate in the detoxification/ renal excretion of drugs and xenobiotics, such as the histamine H(2)-receptor antagonists fexofenadine and cimetidine, the antibiotic benzylpenicillin (PCG), the anionic herbicide 2,4-dichloro-phenoxyacetate (2,4-D), the diagnostic agent p-aminohippurate (PAH), the antiviral acyclovir (ACV), and the mycotoxin ochratoxin (OTA), by transporting these exogenous organic anions across the cell membrane in exchange for dicarboxylates such as 2-oxoglutarate. Contributes to the renal uptake of potent uremic toxins (indoxyl sulfate (IS), indole acetate (IA), hippurate/N-benzoylglycine (HA) and 3-carboxy-4-methyl-5-propyl-2-furanpropionate (CMPF)), pravastatin, PCG, E1S and dehydroepiandrosterone sulfate (DHEAS), and is partly involved in the renal uptake of temocaprilat (an angiotensin-converting enzyme (ACE) inhibitor). May contribute to the release of cortisol in the adrenals. Involved in one of the detoxification systems on the choroid plexus (CP), removes substrates such as E1S or taurocholate (TC), PCG, 2,4-D and PAH, from the cerebrospinal fluid (CSF) to the blood for eventual excretion in urine and bile. Also contributes to the uptake of several other organic compounds such as the prostanoids prostaglandin E(2) and prostaglandin F(2-alpha), L-carnitine, and the therapeutic drugs allopurinol, 6-mercaptopurine (6-MP) and 5-fluorouracil (5-FU). Mediates the transport of PAH, PCG, and the statins pravastatin and pitavastatin, from the cerebrum into the blood circulation across the blood-brain barrier (BBB). In summary, plays a role in the efflux of drugs and xenobiotics, helping reduce their undesired toxicological effects on the body. This chain is Organic anion transporter 3 (SLC22A8), found in Oryctolagus cuniculus (Rabbit).